The following is a 435-amino-acid chain: Kynurenine--oxoglutarate transaminase (435 aa).

Substrate-binding residues include G46 and N198. Residue K262 is modified to N6-(pyridoxal phosphate)lysine. R413 provides a ligand contact to substrate.

Belongs to the class-I pyridoxal-phosphate-dependent aminotransferase family. In terms of assembly, homodimer. Pyridoxal 5'-phosphate is required as a cofactor.

It localises to the cytoplasm. It catalyses the reaction L-kynurenine + 2-oxoglutarate = kynurenate + L-glutamate + H2O. The enzyme catalyses 3-phenylpyruvate + L-glutamine = 2-oxoglutaramate + L-phenylalanine. It carries out the reaction an S-substituted L-cysteine + H2O = a thiol + pyruvate + NH4(+). It functions in the pathway amino-acid degradation; L-kynurenine degradation; kynurenate from L-kynurenine: step 1/2. Catalyzes the irreversible transamination of the L-tryptophan metabolite L-kynurenine to form kynurenic acid (KA). Metabolizes the cysteine conjugates of certain halogenated alkenes and alkanes to form reactive metabolites. Catalyzes the beta-elimination of S-conjugates and Se-conjugates of L-(seleno)cysteine, resulting in the cleavage of the C-S or C-Se bond. The polypeptide is Kynurenine--oxoglutarate transaminase (ccbl) (Dictyostelium discoideum (Social amoeba)).